A 602-amino-acid polypeptide reads, in one-letter code: Glutamine--fructose-6-phosphate aminotransferase [isomerizing] (602 aa).

Cys-2 functions as the Nucleophile; for GATase activity in the catalytic mechanism. The Glutamine amidotransferase type-2 domain maps to 2–217 (CGIVGVVGNT…DQELVIVKAD (216 aa)). Residues 67–87 (IGHTRWATHGKPTEDNAHPHR) form a disordered region. Positions 77-87 (KPTEDNAHPHR) are enriched in basic and acidic residues. SIS domains follow at residues 283-422 (IIKA…ANGN) and 455-592 (VREL…VDKP). Lys-597 acts as the For Fru-6P isomerization activity in catalysis.

Homodimer.

It is found in the cytoplasm. The enzyme catalyses D-fructose 6-phosphate + L-glutamine = D-glucosamine 6-phosphate + L-glutamate. Its function is as follows. Catalyzes the first step in hexosamine metabolism, converting fructose-6P into glucosamine-6P using glutamine as a nitrogen source. The polypeptide is Glutamine--fructose-6-phosphate aminotransferase [isomerizing] (Streptococcus pneumoniae (strain ATCC BAA-255 / R6)).